We begin with the raw amino-acid sequence, 316 residues long: Phosphatidylinositol mannoside acyltransferase (316 aa).

Histidine 137 (proton acceptor) is an active-site residue. Hexadecanoyl-CoA contacts are provided by histidine 137 and arginine 175. Glutamate 211 is an active-site residue. Position 240 (glutamate 240) interacts with hexadecanoyl-CoA.

It belongs to the LpxL/LpxM/LpxP family.

It is found in the cell inner membrane. The catalysed reaction is a 2,6-O-bis(alpha-D-mannopyranosyl)-1-phosphatidyl-1D-myo-inositol + an acyl-CoA = a 2-O-(alpha-D-mannosyl)-6-O-(6-O-acyl-alpha-D-mannosyl)-1-phosphatidyl-1D-myo-inositol + CoA. The enzyme catalyses a 1,2-diacyl-sn-glycero-3-phospho-[alpha-D-mannopyranosyl-(1&lt;-&gt;6)-D-myo-inositol] + an acyl-CoA = a 1,2-diacyl-sn-glycero-3-phospho-[alpha-D-6-acyl-mannopyranosyl-(1&lt;-&gt;6)-D-myo-inositol] + CoA. Its pathway is phospholipid metabolism; phosphatidylinositol metabolism. Its function is as follows. Catalyzes the transfer of a palmitoyl moiety from palmitoyl-CoA to the 6-position of the mannose ring linked to the 2-position of myo-inositol in phosphatidyl-myo-inositol monomannoside (PIM1) or dimannoside (PIM2). This chain is Phosphatidylinositol mannoside acyltransferase, found in Mycobacterium tuberculosis (strain CDC 1551 / Oshkosh).